A 202-amino-acid chain; its full sequence is Urease accessory protein UreE (202 aa).

The span at 171–188 (HHGHSHSHDHDHDHDHQH) shows a compositional bias: basic and acidic residues. The interval 171–202 (HHGHSHSHDHDHDHDHQHGPGCTHGHRGHDHH) is disordered.

This sequence belongs to the UreE family.

Its subcellular location is the cytoplasm. Involved in urease metallocenter assembly. Binds nickel. Probably functions as a nickel donor during metallocenter assembly. The chain is Urease accessory protein UreE from Burkholderia ambifaria (strain ATCC BAA-244 / DSM 16087 / CCUG 44356 / LMG 19182 / AMMD) (Burkholderia cepacia (strain AMMD)).